Reading from the N-terminus, the 419-residue chain is Diaminopimelate decarboxylase (419 aa).

Lys56 is subject to N6-(pyridoxal phosphate)lysine. Pyridoxal 5'-phosphate is bound by residues Gly234 and 274 to 277; that span reads EPGR. Substrate contacts are provided by Arg277, Arg312, and Tyr316. Catalysis depends on Cys343, which acts as the Proton donor. Substrate-binding residues include Glu344 and Tyr372. Tyr372 contributes to the pyridoxal 5'-phosphate binding site.

It belongs to the Orn/Lys/Arg decarboxylase class-II family. LysA subfamily. As to quaternary structure, homodimer. Pyridoxal 5'-phosphate serves as cofactor.

It carries out the reaction meso-2,6-diaminopimelate + H(+) = L-lysine + CO2. The protein operates within amino-acid biosynthesis; L-lysine biosynthesis via DAP pathway; L-lysine from DL-2,6-diaminopimelate: step 1/1. In terms of biological role, specifically catalyzes the decarboxylation of meso-diaminopimelate (meso-DAP) to L-lysine. The sequence is that of Diaminopimelate decarboxylase from Archaeoglobus fulgidus (strain ATCC 49558 / DSM 4304 / JCM 9628 / NBRC 100126 / VC-16).